We begin with the raw amino-acid sequence, 307 residues long: HTH-type transcriptional regulator DmlR (307 aa).

The HTH lysR-type domain maps to 5 to 62 (PLLNDLRVFMLVARRAGFAAVAEELGVSPAFVSKRIALLEQTLNVVLLHRTTRRVTIT). The segment at residues 22–41 (FAAVAEELGVSPAFVSKRIA) is a DNA-binding region (H-T-H motif).

The protein belongs to the LysR transcriptional regulatory family.

Its function is as follows. Transcriptional regulator required for the aerobic growth on D-malate as the sole carbon source. Induces the expression of dmlA in response to D-malate or L- or meso-tartrate. Negatively regulates its own expression. The chain is HTH-type transcriptional regulator DmlR (dmlR) from Escherichia coli (strain K12).